A 99-amino-acid chain; its full sequence is Large ribosomal subunit protein uL23 (99 aa).

The protein belongs to the universal ribosomal protein uL23 family. Part of the 50S ribosomal subunit. Contacts protein L29, and trigger factor when it is bound to the ribosome.

In terms of biological role, one of the early assembly proteins it binds 23S rRNA. One of the proteins that surrounds the polypeptide exit tunnel on the outside of the ribosome. Forms the main docking site for trigger factor binding to the ribosome. This Saccharopolyspora erythraea (strain ATCC 11635 / DSM 40517 / JCM 4748 / NBRC 13426 / NCIMB 8594 / NRRL 2338) protein is Large ribosomal subunit protein uL23.